A 69-amino-acid polypeptide reads, in one-letter code: Putative transmembrane protein ORF34 (69 aa).

2 consecutive transmembrane segments (helical) span residues 7–27 (LLSVLAIIFYGVMVVGSMMQF) and 42–62 (VSLMLVGICAVVCFYASIVYF).

It localises to the host membrane. This Haloarcula hispanica (His1V) protein is Putative transmembrane protein ORF34.